Here is a 157-residue protein sequence, read N- to C-terminus: Putative electron transport protein YsaA (157 aa).

4 consecutive 4Fe-4S ferredoxin-type domains span residues 2 to 32, 48 to 80, 80 to 109, and 112 to 144; these read NRFI…NQDC, KDHC…REHG, GHIF…VVSS, and KARA…CMDV. 16 residues coordinate [4Fe-4S] cluster: C12, C15, C18, C22, C58, C61, C66, C70, C89, C92, C95, C99, C118, C121, C130, and C134.

The sequence is that of Putative electron transport protein YsaA (ysaA) from Escherichia coli (strain K12).